A 288-amino-acid chain; its full sequence is Proline iminopeptidase (288 aa).

The AB hydrolase-1 domain maps to 27–274 (PVIVLHGGPG…SAHMPYIEEP (248 aa)). Ser101 acts as the Nucleophile in catalysis. Asp240 is an active-site residue. His267 (proton donor) is an active-site residue.

It belongs to the peptidase S33 family. In terms of assembly, monomer.

The protein resides in the cytoplasm. It carries out the reaction Release of N-terminal proline from a peptide.. With respect to regulation, completely inhibited by p-chloromercuribenzoate (PCMB) and heavy metal salts. Partially inhibited by proline and proline derivatives with proline as the amino terminus. Enzyme inactivated by PCMB is reactivated by incubation with 2-mercaptoethanol. Releases the N-terminal proline from various substrates including at least dipeptides Pro-Pro, Pro-Gln, Pro-Trp and Pro-Tyr. Also acts on amides (Pro-beta NA) and oligopeptides including Pro-Leu-GlyNH2, Pro-Leu-Gly, Pro-Phe-Gly-Lys, Pro-Pro-Ala-OBut and Pro-Pro-Gly-(Pro-Pro-Gly)(4). Higher activity toward small peptides (up to three residues), but very low activity for longer peptides. Has no activity against p-nitrophenyl acetate, poly_L-proline, Met-Pro or amino acyl amides other than Pro-betaNA (Pyr-betaNA, Phe-betaNA, Cys-betaNA, Met-betaNA, Leu-betaNA, Ala-betaNA and Z-Gly-Pro-betaNA). This is Proline iminopeptidase (pip) from Heyndrickxia coagulans (Weizmannia coagulans).